The chain runs to 284 residues: Tropomyosin Per a 7.0102 (284 aa).

Positions 1–266 form a coiled coil; the sequence is MDAIKKKMQA…EDELVHEKEK (266 aa).

The protein belongs to the tropomyosin family. Homodimer. In terms of tissue distribution, expressed in striated skeletal muscle (at protein level).

Its function is as follows. Tropomyosin, in association with the troponin complex, plays a central role in the calcium dependent regulation of muscle contraction. The polypeptide is Tropomyosin Per a 7.0102 (Periplaneta americana (American cockroach)).